A 380-amino-acid chain; its full sequence is 1-deoxy-D-xylulose 5-phosphate reductoisomerase (380 aa).

Residues threonine 10, glycine 11, serine 12, isoleucine 13, glycine 36, arginine 37, asparagine 38, and asparagine 120 each contribute to the NADPH site. Lysine 121 lines the 1-deoxy-D-xylulose 5-phosphate pocket. NADPH is bound at residue glutamate 122. Aspartate 146 is a binding site for Mn(2+). 1-deoxy-D-xylulose 5-phosphate contacts are provided by serine 147, glutamate 148, serine 172, and histidine 195. Glutamate 148 is a binding site for Mn(2+). Residue glycine 201 coordinates NADPH. Positions 208, 213, 214, and 217 each coordinate 1-deoxy-D-xylulose 5-phosphate. Residue glutamate 217 coordinates Mn(2+).

This sequence belongs to the DXR family. Requires Mg(2+) as cofactor. It depends on Mn(2+) as a cofactor.

The enzyme catalyses 2-C-methyl-D-erythritol 4-phosphate + NADP(+) = 1-deoxy-D-xylulose 5-phosphate + NADPH + H(+). It participates in isoprenoid biosynthesis; isopentenyl diphosphate biosynthesis via DXP pathway; isopentenyl diphosphate from 1-deoxy-D-xylulose 5-phosphate: step 1/6. Functionally, catalyzes the NADPH-dependent rearrangement and reduction of 1-deoxy-D-xylulose-5-phosphate (DXP) to 2-C-methyl-D-erythritol 4-phosphate (MEP). This Listeria monocytogenes serovar 1/2a (strain ATCC BAA-679 / EGD-e) protein is 1-deoxy-D-xylulose 5-phosphate reductoisomerase.